Consider the following 227-residue polypeptide: Cytochrome c oxidase subunit 2 (227 aa).

The Mitochondrial intermembrane segment spans residues 1 to 14; the sequence is MAYPFQLGLQDATS. Residues 15–45 traverse the membrane as a helical segment; that stretch reads PIMEELTNFHDHTLMIVFLISSLVLYIISLM. The Mitochondrial matrix segment spans residues 46–59; that stretch reads LTTKLTHTSTMDAQ. The chain crosses the membrane as a helical span at residues 60 to 87; sequence EVETIWTILPAVILILIALPSLRILYMM. Residues 88-227 are Mitochondrial intermembrane-facing; sequence DEINNPALTV…YFENWSASMI (140 aa). Cu cation contacts are provided by H161, C196, E198, C200, H204, and M207. E198 is a binding site for Mg(2+). Y218 is subject to Phosphotyrosine.

It belongs to the cytochrome c oxidase subunit 2 family. In terms of assembly, component of the cytochrome c oxidase (complex IV, CIV), a multisubunit enzyme composed of 14 subunits. The complex is composed of a catalytic core of 3 subunits MT-CO1, MT-CO2 and MT-CO3, encoded in the mitochondrial DNA, and 11 supernumerary subunits COX4I, COX5A, COX5B, COX6A, COX6B, COX6C, COX7A, COX7B, COX7C, COX8 and NDUFA4, which are encoded in the nuclear genome. The complex exists as a monomer or a dimer and forms supercomplexes (SCs) in the inner mitochondrial membrane with NADH-ubiquinone oxidoreductase (complex I, CI) and ubiquinol-cytochrome c oxidoreductase (cytochrome b-c1 complex, complex III, CIII), resulting in different assemblies (supercomplex SCI(1)III(2)IV(1) and megacomplex MCI(2)III(2)IV(2)). Found in a complex with TMEM177, COA6, COX18, COX20, SCO1 and SCO2. Interacts with TMEM177 in a COX20-dependent manner. Interacts with COX20. Interacts with COX16. The cofactor is Cu cation.

The protein localises to the mitochondrion inner membrane. It carries out the reaction 4 Fe(II)-[cytochrome c] + O2 + 8 H(+)(in) = 4 Fe(III)-[cytochrome c] + 2 H2O + 4 H(+)(out). Its function is as follows. Component of the cytochrome c oxidase, the last enzyme in the mitochondrial electron transport chain which drives oxidative phosphorylation. The respiratory chain contains 3 multisubunit complexes succinate dehydrogenase (complex II, CII), ubiquinol-cytochrome c oxidoreductase (cytochrome b-c1 complex, complex III, CIII) and cytochrome c oxidase (complex IV, CIV), that cooperate to transfer electrons derived from NADH and succinate to molecular oxygen, creating an electrochemical gradient over the inner membrane that drives transmembrane transport and the ATP synthase. Cytochrome c oxidase is the component of the respiratory chain that catalyzes the reduction of oxygen to water. Electrons originating from reduced cytochrome c in the intermembrane space (IMS) are transferred via the dinuclear copper A center (CU(A)) of subunit 2 and heme A of subunit 1 to the active site in subunit 1, a binuclear center (BNC) formed by heme A3 and copper B (CU(B)). The BNC reduces molecular oxygen to 2 water molecules using 4 electrons from cytochrome c in the IMS and 4 protons from the mitochondrial matrix. The sequence is that of Cytochrome c oxidase subunit 2 (MT-CO2) from Oenomys hypoxanthus (Rufous-nosed rat).